The primary structure comprises 177 residues: Large ribosomal subunit protein uL6 (177 aa).

This sequence belongs to the universal ribosomal protein uL6 family. In terms of assembly, part of the 50S ribosomal subunit.

This protein binds to the 23S rRNA, and is important in its secondary structure. It is located near the subunit interface in the base of the L7/L12 stalk, and near the tRNA binding site of the peptidyltransferase center. This Bartonella bacilliformis (strain ATCC 35685 / KC583 / Herrer 020/F12,63) protein is Large ribosomal subunit protein uL6.